A 35-amino-acid chain; its full sequence is Unknown protein 14 from 2D-PAGE (35 aa).

The disordered stretch occupies residues 1 to 35; it reads VVXXQTLXDXRGIYGDQGSIGPXXIXGLQGDRDAD.

This chain is Unknown protein 14 from 2D-PAGE, found in Bombyx mori (Silk moth).